The chain runs to 322 residues: Formimidoylglutamase (322 aa).

Mn(2+) contacts are provided by His-130, Asp-156, His-158, Asp-160, Cys-244, and Asp-246.

The protein belongs to the arginase family. Mn(2+) is required as a cofactor.

It catalyses the reaction N-formimidoyl-L-glutamate + H2O = formamide + L-glutamate. It participates in amino-acid degradation; L-histidine degradation into L-glutamate; L-glutamate from N-formimidoyl-L-glutamate (hydrolase route): step 1/1. Its function is as follows. Catalyzes the conversion of N-formimidoyl-L-glutamate to L-glutamate and formamide. The polypeptide is Formimidoylglutamase (Geobacillus thermodenitrificans (strain NG80-2)).